The following is a 609-amino-acid chain: MPAMPGLVSVKTPSDTPPLRVAVPDTQPLSNPPRTPMKKTPSSTPSRSKPSPNRSTGKKDSPTVSSSTAAVIDVDDPSLDNPDLGPFLLKLARDAIASGEGPNKALDYAIRATKSFERCCAAVAPPIPGGSDGGPVLDLAMSLHVLAAIYCSLGRFDEAVPPLERAIQVPDPTRGPDHSLAAFSGHMQLGDTLSMLGQIDRSIACYEEGLKIQIQTLGDTDPRVGETCRYLAEAYVQAMQFNKAEELCKKTLEIHRAHSEPASLEEAADRRLMAIICEAKGDYENALEHLVLASMAMIASGQESEVASIDVSIGNIYMSLCRFDEAVFSYQKALTVFKASKGETHPTVASVFVRLAELYHRTGKLRESKSYCENALRIYNKPVPGTTVEEIAGGLTEISAIYESVDEPEEALKLLQKSMKLLEDKPGQQSAIAGLEARMGVMYYTVGRYEDARNAFESAVTKLRAAGEKSAFFGVVLNQMGLACVQLFKIDEAGELFEEARGILEQERGPCDQDTLGVYSNLAATYDAMGRIEDAIEILEQVLKLREEKLGTANPDFEDEKKRLAELLKEAGRSRNYKAKSLQNLIDPNARPPKKESSAKKWPSLGFKF.

The disordered stretch occupies residues methionine 1 to proline 77. The span at lysine 38–serine 55 shows a compositional bias: low complexity. 10 TPR repeats span residues alanine 140–threonine 173, phenylalanine 183–threonine 216, glycine 225–histidine 258, alanine 267–glycine 301, alanine 307–serine 340, alanine 349–proline 382, alanine 392–lysine 425, alanine 433–alanine 466, glycine 474–glutamate 507, and leucine 516–lysine 549. Residues leucine 582–phenylalanine 609 form a disordered region.

It belongs to the kinesin light chain family. In terms of assembly, interacts with IQD1.

It is found in the cytoplasm. Its subcellular location is the cytoskeleton. This chain is Protein KINESIN LIGHT CHAIN-RELATED 1, found in Arabidopsis thaliana (Mouse-ear cress).